Reading from the N-terminus, the 388-residue chain is Flap endonuclease 1 (388 aa).

An N-domain region spans residues 1 to 104 (MGILGLSKLI…GELAKRAERR (104 aa)). Residue aspartate 34 participates in Mg(2+) binding. Residues arginine 47 and arginine 70 each contribute to the DNA site. Residues aspartate 86, glutamate 158, glutamate 160, aspartate 179, and aspartate 181 each coordinate Mg(2+). An I-domain region spans residues 122 to 253 (EIEKFNRRLV…KRAIELINSY (132 aa)). Position 158 (glutamate 158) interacts with DNA. The DNA site is built by glycine 231 and aspartate 233. A Mg(2+)-binding site is contributed by aspartate 233. Residues 336–344 (TQVRLDSFF) are interaction with PCNA. The interval 355-388 (AAAKRKAEEAKKSANNKKAKIGGGGGAGRGRRPK) is disordered.

It belongs to the XPG/RAD2 endonuclease family. FEN1 subfamily. Interacts with PCNA. Three molecules of FEN1 bind to one PCNA trimer with each molecule binding to one PCNA monomer. PCNA stimulates the nuclease activity without altering cleavage specificity. It depends on Mg(2+) as a cofactor. Post-translationally, phosphorylated. Phosphorylation upon DNA damage induces relocalization to the nuclear plasma.

It is found in the nucleus. The protein localises to the nucleolus. The protein resides in the nucleoplasm. It localises to the mitochondrion. Functionally, structure-specific nuclease with 5'-flap endonuclease and 5'-3' exonuclease activities involved in DNA replication and repair. During DNA replication, cleaves the 5'-overhanging flap structure that is generated by displacement synthesis when DNA polymerase encounters the 5'-end of a downstream Okazaki fragment. It enters the flap from the 5'-end and then tracks to cleave the flap base, leaving a nick for ligation. Also involved in the long patch base excision repair (LP-BER) pathway, by cleaving within the apurinic/apyrimidinic (AP) site-terminated flap. Acts as a genome stabilization factor that prevents flaps from equilibrating into structures that lead to duplications and deletions. Also possesses 5'-3' exonuclease activity on nicked or gapped double-stranded DNA, and exhibits RNase H activity. Also involved in replication and repair of rDNA and in repairing mitochondrial DNA. In Drosophila willistoni (Fruit fly), this protein is Flap endonuclease 1.